Here is a 127-residue protein sequence, read N- to C-terminus: Small ribosomal subunit protein uS13 (127 aa).

The disordered stretch occupies residues 93-127; it reads RRSLPVRGQRTHTNARTRKGPRRGTVAGKKKATKT.

The protein belongs to the universal ribosomal protein uS13 family. As to quaternary structure, part of the 30S ribosomal subunit. Forms a loose heterodimer with protein S19. Forms two bridges to the 50S subunit in the 70S ribosome.

Its function is as follows. Located at the top of the head of the 30S subunit, it contacts several helices of the 16S rRNA. In the 70S ribosome it contacts the 23S rRNA (bridge B1a) and protein L5 of the 50S subunit (bridge B1b), connecting the 2 subunits; these bridges are implicated in subunit movement. Contacts the tRNAs in the A and P-sites. The protein is Small ribosomal subunit protein uS13 of Acidobacterium capsulatum (strain ATCC 51196 / DSM 11244 / BCRC 80197 / JCM 7670 / NBRC 15755 / NCIMB 13165 / 161).